Reading from the N-terminus, the 61-residue chain is Photosystem II reaction center protein K (61 aa).

The propeptide occupies M1–G24. A helical transmembrane segment spans residues I36–A56.

This sequence belongs to the PsbK family. As to quaternary structure, PSII is composed of 1 copy each of membrane proteins PsbA, PsbB, PsbC, PsbD, PsbE, PsbF, PsbH, PsbI, PsbJ, PsbK, PsbL, PsbM, PsbT, PsbX, PsbY, PsbZ, Psb30/Ycf12, at least 3 peripheral proteins of the oxygen-evolving complex and a large number of cofactors. It forms dimeric complexes.

It is found in the plastid. The protein resides in the chloroplast thylakoid membrane. Its function is as follows. One of the components of the core complex of photosystem II (PSII). PSII is a light-driven water:plastoquinone oxidoreductase that uses light energy to abstract electrons from H(2)O, generating O(2) and a proton gradient subsequently used for ATP formation. It consists of a core antenna complex that captures photons, and an electron transfer chain that converts photonic excitation into a charge separation. In Nicotiana tomentosiformis (Tobacco), this protein is Photosystem II reaction center protein K.